Here is a 728-residue protein sequence, read N- to C-terminus: Polyribonucleotide nucleotidyltransferase (728 aa).

Asp-513 and Asp-519 together coordinate Mg(2+). The KH domain maps to 580 to 640; the sequence is PKVKMILIKP…EIVDLTVTYI (61 aa). The S1 motif domain maps to 650 to 724; the sequence is ENVYEVKILR…ERGQIDLSKK (75 aa).

Belongs to the polyribonucleotide nucleotidyltransferase family. It depends on Mg(2+) as a cofactor.

Its subcellular location is the cytoplasm. It catalyses the reaction RNA(n+1) + phosphate = RNA(n) + a ribonucleoside 5'-diphosphate. Involved in mRNA degradation. Catalyzes the phosphorolysis of single-stranded polyribonucleotides processively in the 3'- to 5'-direction. The sequence is that of Polyribonucleotide nucleotidyltransferase from Phytoplasma mali (strain AT).